The following is a 410-amino-acid chain: Argininosuccinate synthase (410 aa).

ATP contacts are provided by residues 13–21 (AYSGGLDTS) and Ala40. Residues Tyr91 and Ser96 each contribute to the L-citrulline site. An ATP-binding site is contributed by Gly121. Residues Thr123, Asn127, and Asp128 each contribute to the L-aspartate site. Residue Asn127 participates in L-citrulline binding. Positions 131, 182, 191, 267, and 279 each coordinate L-citrulline.

Belongs to the argininosuccinate synthase family. Type 1 subfamily. Homotetramer.

It is found in the cytoplasm. The catalysed reaction is L-citrulline + L-aspartate + ATP = 2-(N(omega)-L-arginino)succinate + AMP + diphosphate + H(+). The protein operates within amino-acid biosynthesis; L-arginine biosynthesis; L-arginine from L-ornithine and carbamoyl phosphate: step 2/3. The polypeptide is Argininosuccinate synthase (Maricaulis maris (strain MCS10) (Caulobacter maris)).